An 856-amino-acid polypeptide reads, in one-letter code: Leucine--tRNA ligase (856 aa).

A 'HIGH' region motif is present at residues 42-52 (PYPSGKLHMGH). Positions 615 to 619 (KMSKS) match the 'KMSKS' region motif. K618 serves as a coordination point for ATP.

It belongs to the class-I aminoacyl-tRNA synthetase family.

It is found in the cytoplasm. It carries out the reaction tRNA(Leu) + L-leucine + ATP = L-leucyl-tRNA(Leu) + AMP + diphosphate. This chain is Leucine--tRNA ligase, found in Chromohalobacter salexigens (strain ATCC BAA-138 / DSM 3043 / CIP 106854 / NCIMB 13768 / 1H11).